Here is a 223-residue protein sequence, read N- to C-terminus: Small heat shock protein hspI, mitochondrial (223 aa).

A mitochondrion-targeting transit peptide spans 1–23; it reads MYKLSKTTPFFFRRAFLCGRRGG. The sHSP domain occupies 109–223; that stretch reads KTRGFRSPKT…YVKSTTINVQ (115 aa).

Belongs to the small heat shock protein (HSP20) family.

It is found in the mitochondrion. The chain is Small heat shock protein hspI, mitochondrial (hspI) from Dictyostelium discoideum (Social amoeba).